The following is a 201-amino-acid chain: Glutathione peroxidase 1 (201 aa).

Ser-32 is modified (phosphoserine). Residue Sec-47 is part of the active site. Sec-47 is a non-standard amino acid (selenocysteine). An N6-acetyllysine; alternate mark is found at Lys-86, Lys-112, and Lys-146. An N6-succinyllysine; alternate mark is found at Lys-86, Lys-112, and Lys-146. Phosphoserine is present on residues Ser-195 and Ser-199.

This sequence belongs to the glutathione peroxidase family. Homotetramer. Interacts with MIEN1. Post-translationally, during periods of oxidative stress, Sec-47 may react with a superoxide radical, irreversibly lose hydroselenide and be converted to dehydroalanine.

It is found in the cytoplasm. The catalysed reaction is 2 glutathione + H2O2 = glutathione disulfide + 2 H2O. It carries out the reaction (12S)-hydroperoxy-(5Z,8Z,10E,14Z)-eicosatetraenoate + 2 glutathione = (12S)-hydroxy-(5Z,8Z,10E,14Z)-eicosatetraenoate + glutathione disulfide + H2O. Its function is as follows. Protects the hemoglobin in erythrocytes from oxidative breakdown. In platelets, plays a crucial role of glutathione peroxidase in the arachidonic acid metabolism. This chain is Glutathione peroxidase 1 (GPX1), found in Hylobates lar (Lar gibbon).